Consider the following 498-residue polypeptide: Signal recognition particle receptor FtsY (498 aa).

2 disordered regions span residues 1–130 (MGLF…PNQS) and 147–200 (KVES…YNRS). A compositionally biased stretch (low complexity) spans 36 to 46 (ALLAETAETAE). Residues 103 to 120 (SENSVAAVQNNTETMPSQ) show a composition bias toward polar residues. Residues 301–308 (GVNGVGKT), 383–387 (DTAGR), and 447–450 (TKID) each bind GTP.

Belongs to the GTP-binding SRP family. FtsY subfamily. Part of the signal recognition particle protein translocation system, which is composed of SRP and FtsY.

The protein localises to the cell membrane. It localises to the cytoplasm. The enzyme catalyses GTP + H2O = GDP + phosphate + H(+). In terms of biological role, involved in targeting and insertion of nascent membrane proteins into the cytoplasmic membrane. Acts as a receptor for the complex formed by the signal recognition particle (SRP) and the ribosome-nascent chain (RNC). The polypeptide is Signal recognition particle receptor FtsY (Streptococcus mutans serotype c (strain ATCC 700610 / UA159)).